The sequence spans 358 residues: Sulfoquinovosyl glycerol transport ATP-binding protein SmoE (358 aa).

One can recognise an ABC transporter domain in the interval V4–V234. G36–S43 serves as a coordination point for ATP.

Belongs to the ABC transporter superfamily. As to quaternary structure, the complex is probably composed of two ATP-binding proteins (SmoE), two transmembrane proteins (SmoG and SmoH) and a solute-binding protein (SmoF).

The protein localises to the cell inner membrane. In terms of biological role, part of the ABC transporter complex SmoEFGH involved in sulfoquinovosyl glycerol (SQGro) uptake. Responsible for energy coupling to the transport system. The chain is Sulfoquinovosyl glycerol transport ATP-binding protein SmoE from Agrobacterium fabrum (strain C58 / ATCC 33970) (Agrobacterium tumefaciens (strain C58)).